Consider the following 903-residue polypeptide: MRQGAARGCRWFVVWALLGLTLGVLVASAAPSSPGTPGVAAATQAANGGPATPAPPAPGPAPTGDTKPKKNKKPKNPPPPRPAGDNATVAAGHATLREHLRDIKAENTDANFYVCPPPTGATVVQFEQPRRCPTRPEGQNYTEGIAVVFKENIAPYKFKATMYYKDVTVSQVWFGHRYSQFMGIFEDRAPVPFEEVIDKINAKGVCRSTAKYVRNNLETTAFHRDDHETDMELKPANAATRTSRGWHTTDLKYNPSRVEAFHRYGTTVNCIVEEVDARSVYPYDEFVLATGDFVYMSPFYGYREGSHTEHTSYAADRFKQVDGFYARDLTTKARATAPTTRNLLTTPKFTVAWDWVPKRPSVCTMTKWQEVDEMLRSEYGGSFRFSSDAISTTFTTNLTEYPLSRVDLGDCIGKDARDAMDRIFARRYNATHIKVGQPQYYLANGGFLIAYQPLLSNTLAELYVREHLREQSRKPPNPTPPPPGASANASVERIKTTSSIEFARLQFTYNHIQRHVNDMLGRVAIAWCELQNHELTLWNEARKLNPNAIASATVGRRVSARMLGDVMAVSTCVPVAADNVIVQNSMRISSRPGACYSRPLVSFRYEDQGPLVEGQLGENNELRLTRDAIEPCTVGHRRYFTFGGGYVYFEEYAYSHQLSRADITTVSTFIDLNITMLEDHEFVPLEVYTRHEIKDSGLLDYTEVQRRNQLHDLRFADIDTVIHADANAAMFAGLGAFFEGMGDLGRAVGKVVMGIVGGVVSAVSGVSSFMSNPFGALAVGLLVLAGLAAAFFAFRYVMRLQSNPMKALYPLTTKELKNPTNPDASGEGEEGGDFDEAKLAEAREMIRYMALVSAMERTEHKAKKKGTSALLSAKVTDMVMRKRRNTNYTQVPNKDGDADEDDL.

The signal sequence occupies residues 1–29; the sequence is MRQGAARGCRWFVVWALLGLTLGVLVASA. Over residues 30 to 51 the composition is skewed to low complexity; it reads APSSPGTPGVAAATQAANGGPA. Residues 30–87 form a disordered region; the sequence is APSSPGTPGVAAATQAANGGPATPAPPAPGPAPTGDTKPKKNKKPKNPPPPRPAGDNA. Topologically, residues 30-773 are virion surface; that stretch reads APSSPGTPGV…SGVSSFMSNP (744 aa). Positions 52 to 61 are enriched in pro residues; the sequence is TPAPPAPGPA. N86 and N140 each carry an N-linked (GlcNAc...) asparagine; by host glycan. 5 disulfide bridges follow: C115–C572, C132–C528, C206–C270, C363–C411, and C595–C632. 2 involved in fusion and/or binding to host membrane regions span residues 172-178 and 257-264; these read VWFGHRY and RVEAFHRY. 2 N-linked (GlcNAc...) asparagine; by host glycosylation sites follow: N397 and N429. Residues 469-491 are disordered; sequence REQSRKPPNPTPPPPGASANASV. A compositionally biased stretch (pro residues) spans 475-484; the sequence is PPNPTPPPPG. A glycan (N-linked (GlcNAc...) asparagine; by host) is linked at N488. N-linked (GlcNAc...) asparagine; by host glycosylation occurs at N673. The interval 718-771 is hydrophobic membrane proximal region; it reads IDTVIHADANAAMFAGLGAFFEGMGDLGRAVGKVVMGIVGGVVSAVSGVSSFMS. The chain crosses the membrane as a helical span at residues 774–794; it reads FGALAVGLLVLAGLAAAFFAF. Residues 795 to 903 are Intravirion-facing; sequence RYVMRLQSNP…KDGDADEDDL (109 aa). A Golgi targeting motif is present at residues 848–851; it reads YMAL. Residues 882–903 are disordered; that stretch reads KRRNTNYTQVPNKDGDADEDDL. The short motif at 888 to 891 is the Internalization motif element; the sequence is YTQV.

This sequence belongs to the herpesviridae glycoprotein B family. As to quaternary structure, homotrimer; disulfide-linked. Interacts with host receptor MYH9/NMMHC-IIA. Interacts with host receptor MYH10/NMMHC-IIB. Interacts with the host coreceptor PILRA. Binds to heparan sulfate proteoglycans. Interacts with gH/gL heterodimer. Interacts with gD. Post-translationally, the cytoplasmic tail is phosphorylated by the viral kinase US3. Phosphorylation may be linked to a down-regulation of gB expression on cell surface. Ubiquitinated.

The protein localises to the virion membrane. Its subcellular location is the host cell membrane. It is found in the host endosome membrane. The protein resides in the host Golgi apparatus membrane. Envelope glycoprotein that forms spikes at the surface of virion envelope and binds to the host cell entry receptors MYH9/NMMHC-IIA and MYH10/NMMHC-IIB, promoting the virus entry into host cells. Essential for the initial attachment to heparan sulfate moieties of the host cell surface proteoglycans. Involved in fusion of viral and cellular membranes leading to virus entry into the host cell: following initial binding to its host cell entry receptors, membrane fusion is mediated by the fusion machinery composed at least of gB and the heterodimer gH/gL. May be involved in the fusion between the virion envelope and the outer nuclear membrane during virion egress. Also plays a role, together with gK, in virus-induced cell-to-cell fusion (syncytia formation). The sequence is that of Envelope glycoprotein B from Homo sapiens (Human).